Here is a 455-residue protein sequence, read N- to C-terminus: Kynurenine 3-monooxygenase (455 aa).

It belongs to the aromatic-ring hydroxylase family. KMO subfamily. FAD is required as a cofactor.

The catalysed reaction is L-kynurenine + NADPH + O2 + H(+) = 3-hydroxy-L-kynurenine + NADP(+) + H2O. It functions in the pathway cofactor biosynthesis; NAD(+) biosynthesis; quinolinate from L-kynurenine: step 1/3. Functionally, catalyzes the hydroxylation of L-kynurenine (L-Kyn) to form 3-hydroxy-L-kynurenine (L-3OHKyn). Required for synthesis of quinolinic acid. In Xanthomonas oryzae pv. oryzae (strain MAFF 311018), this protein is Kynurenine 3-monooxygenase.